We begin with the raw amino-acid sequence, 625 residues long: Alpha-1,3-galactosidase A (625 aa).

Positions 1 to 32 (MAHGCSGGAMSRFVFLGVALALLGGATSPAAA) are cleaved as a signal peptide. PbH1 repeat units lie at residues 342–364 (KGKV…NIHG), 460–482 (TPSV…LVTT), 483–505 (RKPV…YVSA), 516–537 (VADL…IFVE), and 573–611 (VGGF…RIAR).

Belongs to the glycosyl hydrolase 110 family. A subfamily.

The enzyme catalyses Hydrolysis of terminal, non-reducing branched (1-&gt;3)-alpha-D-galactosidic residues, producing free D-galactose.. It catalyses the reaction Hydrolysis of terminal, non-reducing alpha-D-galactose residues in alpha-D-galactosides, including galactose oligosaccharides, galactomannans and galactolipids.. In terms of biological role, alpha-galactosidase that specifically removes branched alpha-1,3-linked galactose residues present in blood group B antigens. Has no activity toward linear alpha-1,3-linked galactose residues. This is Alpha-1,3-galactosidase A (glaA) from Streptomyces avermitilis (strain ATCC 31267 / DSM 46492 / JCM 5070 / NBRC 14893 / NCIMB 12804 / NRRL 8165 / MA-4680).